The sequence spans 106 residues: Iron-sulfur cluster assembly protein CyaY (106 aa).

It belongs to the frataxin family.

In terms of biological role, involved in iron-sulfur (Fe-S) cluster assembly. May act as a regulator of Fe-S biogenesis. This Escherichia coli O127:H6 (strain E2348/69 / EPEC) protein is Iron-sulfur cluster assembly protein CyaY.